A 174-amino-acid polypeptide reads, in one-letter code: RNA pyrophosphohydrolase (174 aa).

The Nudix hydrolase domain occupies 6 to 149; that stretch reads GYRPNVGIIL…KRDVYLGALK (144 aa). The Nudix box motif lies at 38-59; sequence GGIKPGESPETAMYRELYEEVG.

The protein belongs to the Nudix hydrolase family. RppH subfamily. A divalent metal cation serves as cofactor.

Functionally, accelerates the degradation of transcripts by removing pyrophosphate from the 5'-end of triphosphorylated RNA, leading to a more labile monophosphorylated state that can stimulate subsequent ribonuclease cleavage. The sequence is that of RNA pyrophosphohydrolase from Neisseria meningitidis serogroup C (strain 053442).